The chain runs to 192 residues: Putative 3-methyladenine DNA glycosylase (192 aa).

The protein belongs to the DNA glycosylase MPG family.

This is Putative 3-methyladenine DNA glycosylase from Methanoculleus marisnigri (strain ATCC 35101 / DSM 1498 / JR1).